A 389-amino-acid polypeptide reads, in one-letter code: Succinate--CoA ligase [ADP-forming] subunit beta (389 aa).

The region spanning 9 to 236 (KELFASHGVP…KDAEDPLEAK (228 aa)) is the ATP-grasp domain. Residues Lys-45, 52-54 (GRG), Ser-94, and Glu-99 each bind ATP. Asn-191 and Asp-205 together coordinate Mg(2+). Substrate is bound by residues Asn-256 and 318–320 (GIT).

Belongs to the succinate/malate CoA ligase beta subunit family. Heterotetramer of two alpha and two beta subunits. It depends on Mg(2+) as a cofactor.

It catalyses the reaction succinate + ATP + CoA = succinyl-CoA + ADP + phosphate. The catalysed reaction is GTP + succinate + CoA = succinyl-CoA + GDP + phosphate. It participates in carbohydrate metabolism; tricarboxylic acid cycle; succinate from succinyl-CoA (ligase route): step 1/1. In terms of biological role, succinyl-CoA synthetase functions in the citric acid cycle (TCA), coupling the hydrolysis of succinyl-CoA to the synthesis of either ATP or GTP and thus represents the only step of substrate-level phosphorylation in the TCA. The beta subunit provides nucleotide specificity of the enzyme and binds the substrate succinate, while the binding sites for coenzyme A and phosphate are found in the alpha subunit. The polypeptide is Succinate--CoA ligase [ADP-forming] subunit beta (Saccharopolyspora erythraea (strain ATCC 11635 / DSM 40517 / JCM 4748 / NBRC 13426 / NCIMB 8594 / NRRL 2338)).